Reading from the N-terminus, the 310-residue chain is Dopamine receptor-interacting protein 1 (310 aa).

Interacts with DRD1.

In terms of biological role, could be a regulator of the dopamine receptor signaling pathway. In Homo sapiens (Human), this protein is Dopamine receptor-interacting protein 1.